Reading from the N-terminus, the 505-residue chain is Trans-cinnamate 4-monooxygenase (505 aa).

The helical transmembrane segment at 3–23 (LLLLEKTLLGLFLAAVVAIVV) threads the bilayer. (E)-cinnamate is bound by residues 213 to 218 (RSRLAQ) and Ala-306. Residue Cys-447 coordinates heme.

Belongs to the cytochrome P450 family. The cofactor is heme.

The protein resides in the membrane. The enzyme catalyses (E)-cinnamate + reduced [NADPH--hemoprotein reductase] + O2 = (E)-4-coumarate + oxidized [NADPH--hemoprotein reductase] + H2O + H(+). It participates in phenylpropanoid metabolism; trans-4-coumarate biosynthesis; trans-4-coumarate from trans-cinnamate: step 1/1. Functionally, catalyzes the first oxidative step of the phenylpropanoid pathway in higher plants by transforming trans-cinnamate into p-coumarate. The compounds formed by this pathway are essential components for lignification, pollination, and defense against ultraviolet light, predators and pathogens. The sequence is that of Trans-cinnamate 4-monooxygenase (CYP73A2) from Vigna radiata var. radiata (Mung bean).